Consider the following 311-residue polypeptide: Dihydroorotate dehydrogenase A (fumarate) (311 aa).

FMN contacts are provided by residues Ser-19 and 43–44 (KS). Residues Lys-43, 67 to 71 (NSMGL), and Asn-127 each bind substrate. Asn-127 is a binding site for FMN. Catalysis depends on Cys-130, which acts as the Nucleophile. FMN is bound by residues Lys-164 and Val-192. A substrate-binding site is contributed by 193–194 (NS). FMN is bound by residues Gly-221, 249-250 (GG), and 271-272 (GT).

Belongs to the dihydroorotate dehydrogenase family. Type 1 subfamily. Homodimer. FMN serves as cofactor.

It is found in the cytoplasm. It catalyses the reaction (S)-dihydroorotate + fumarate = orotate + succinate. It functions in the pathway pyrimidine metabolism; UMP biosynthesis via de novo pathway. Functionally, catalyzes the conversion of dihydroorotate to orotate with fumarate as the electron acceptor. In Lactococcus lactis subsp. lactis (strain IL1403) (Streptococcus lactis), this protein is Dihydroorotate dehydrogenase A (fumarate) (pyrDA).